Here is a 347-residue protein sequence, read N- to C-terminus: Holliday junction branch migration complex subunit RuvB (347 aa).

Over residues 1–10 (MAIVSSSSGR) the composition is skewed to polar residues. The disordered stretch occupies residues 1–29 (MAIVSSSSGRKSPCRETALVDPQPAPEEQ). The segment at 13 to 198 (PCRETALVDP…FGLIQRLEFY (186 aa)) is large ATPase domain (RuvB-L). ATP-binding residues include L37, R38, G79, K82, T83, T84, R188, Y198, and R235. T83 serves as a coordination point for Mg(2+). The small ATPAse domain (RuvB-S) stretch occupies residues 199–270 (GQTDLEAIVA…MVAEALSLHR (72 aa)). Positions 273 to 347 (HRGLDASDRR…AARSHIAEAA (75 aa)) are head domain (RuvB-H). 2 residues coordinate DNA: R328 and R333.

The protein belongs to the RuvB family. As to quaternary structure, homohexamer. Forms an RuvA(8)-RuvB(12)-Holliday junction (HJ) complex. HJ DNA is sandwiched between 2 RuvA tetramers; dsDNA enters through RuvA and exits via RuvB. An RuvB hexamer assembles on each DNA strand where it exits the tetramer. Each RuvB hexamer is contacted by two RuvA subunits (via domain III) on 2 adjacent RuvB subunits; this complex drives branch migration. In the full resolvosome a probable DNA-RuvA(4)-RuvB(12)-RuvC(2) complex forms which resolves the HJ.

The protein localises to the cytoplasm. It carries out the reaction ATP + H2O = ADP + phosphate + H(+). In terms of biological role, the RuvA-RuvB-RuvC complex processes Holliday junction (HJ) DNA during genetic recombination and DNA repair, while the RuvA-RuvB complex plays an important role in the rescue of blocked DNA replication forks via replication fork reversal (RFR). RuvA specifically binds to HJ cruciform DNA, conferring on it an open structure. The RuvB hexamer acts as an ATP-dependent pump, pulling dsDNA into and through the RuvAB complex. RuvB forms 2 homohexamers on either side of HJ DNA bound by 1 or 2 RuvA tetramers; 4 subunits per hexamer contact DNA at a time. Coordinated motions by a converter formed by DNA-disengaged RuvB subunits stimulates ATP hydrolysis and nucleotide exchange. Immobilization of the converter enables RuvB to convert the ATP-contained energy into a lever motion, pulling 2 nucleotides of DNA out of the RuvA tetramer per ATP hydrolyzed, thus driving DNA branch migration. The RuvB motors rotate together with the DNA substrate, which together with the progressing nucleotide cycle form the mechanistic basis for DNA recombination by continuous HJ branch migration. Branch migration allows RuvC to scan DNA until it finds its consensus sequence, where it cleaves and resolves cruciform DNA. The sequence is that of Holliday junction branch migration complex subunit RuvB from Synechococcus sp. (strain CC9902).